Consider the following 562-residue polypeptide: F-box only protein 33 (562 aa).

One can recognise an F-box domain in the interval 68 to 114; it reads AAGAASLPSELIVHIFSFLPAPDRLRASASCSHWRECLFYPALWPQL. Residues 155–173 are compositionally biased toward gly residues; sequence GGGPGDGGSGGGTDTGTGG. The disordered stretch occupies residues 155–176; the sequence is GGGPGDGGSGGGTDTGTGGEDG.

Part of the SCF (SKP1-CUL1-F-box) E3 ubiquitin-protein ligase complex SCF(FBXO33) formed of CUL1, SKP1, RBX1 and FBXO33. Interacts via its N-terminus with YBX1 CSD domain. Directly interacts with SKP1 and CUL1.

It participates in protein modification; protein ubiquitination. Its function is as follows. Substrate recognition component of a SCF (SKP1-CUL1-F-box protein) E3 ubiquitin-protein ligase complex which mediates the ubiquitination and subsequent proteasomal degradation of target proteins. Probably recognizes and binds to phosphorylated target proteins. Recognizes YBX1. The chain is F-box only protein 33 (Fbxo33) from Mus musculus (Mouse).